We begin with the raw amino-acid sequence, 309 residues long: Homoserine O-succinyltransferase (309 aa).

Cys142 serves as the catalytic Acyl-thioester intermediate. Substrate-binding residues include Lys163 and Ser192. His235 functions as the Proton acceptor in the catalytic mechanism. The active site involves Glu237. Arg249 is a binding site for substrate.

Belongs to the MetA family.

The protein localises to the cytoplasm. It catalyses the reaction L-homoserine + succinyl-CoA = O-succinyl-L-homoserine + CoA. It functions in the pathway amino-acid biosynthesis; L-methionine biosynthesis via de novo pathway; O-succinyl-L-homoserine from L-homoserine: step 1/1. In terms of biological role, transfers a succinyl group from succinyl-CoA to L-homoserine, forming succinyl-L-homoserine. The sequence is that of Homoserine O-succinyltransferase from Citrobacter koseri (strain ATCC BAA-895 / CDC 4225-83 / SGSC4696).